A 177-amino-acid polypeptide reads, in one-letter code: Small ribosomal subunit protein uS5 (177 aa).

The S5 DRBM domain occupies 21 to 84 (LKEKMVSVNR…DEARQRMVRV (64 aa)).

It belongs to the universal ribosomal protein uS5 family. As to quaternary structure, part of the 30S ribosomal subunit. Contacts proteins S4 and S8.

With S4 and S12 plays an important role in translational accuracy. Functionally, located at the back of the 30S subunit body where it stabilizes the conformation of the head with respect to the body. The chain is Small ribosomal subunit protein uS5 from Nitrosomonas europaea (strain ATCC 19718 / CIP 103999 / KCTC 2705 / NBRC 14298).